Here is a 427-residue protein sequence, read N- to C-terminus: Tuberculostearic acid methyltransferase UfaA1 (427 aa).

It belongs to the CFA/CMAS family.

It participates in lipid metabolism; fatty acid biosynthesis. Its activity is regulated as follows. Inhibited by S-adenosyl-L-homocysteine. Functionally, involved in the biosynthesis of the tuberculostearic acid (10-methylstearic-acid or TSA), a constituent lipid of the mycobacterial cell wall. Catalyzes the transfer of the methyl group from S-adenosyl-L-methionine (SAM) to the double bond of oleic acid in phosphatidylethanolamine or phosphatidylcholine to produce TSA. The chain is Tuberculostearic acid methyltransferase UfaA1 from Mycobacterium tuberculosis (strain ATCC 25618 / H37Rv).